A 164-amino-acid polypeptide reads, in one-letter code: Transcriptional regulator MraZ (164 aa).

SpoVT-AbrB domains lie at 7 to 60 and 83 to 126; these read HYTN…EIDG and SEIL…EPGR. A disordered region spans residues 144–164; that stretch reads QLSARHAAPDAPPLRSHGARE.

It belongs to the MraZ family. In terms of assembly, forms oligomers.

Its subcellular location is the cytoplasm. The protein resides in the nucleoid. This Methylocella silvestris (strain DSM 15510 / CIP 108128 / LMG 27833 / NCIMB 13906 / BL2) protein is Transcriptional regulator MraZ.